Here is a 99-residue protein sequence, read N- to C-terminus: DNA-directed RNA polymerase subunit omega (99 aa).

Belongs to the RNA polymerase subunit omega family. As to quaternary structure, the RNAP catalytic core consists of 2 alpha, 1 beta, 1 beta' and 1 omega subunit. When a sigma factor is associated with the core the holoenzyme is formed, which can initiate transcription.

It catalyses the reaction RNA(n) + a ribonucleoside 5'-triphosphate = RNA(n+1) + diphosphate. Functionally, promotes RNA polymerase assembly. Latches the N- and C-terminal regions of the beta' subunit thereby facilitating its interaction with the beta and alpha subunits. This Stenotrophomonas maltophilia (strain K279a) protein is DNA-directed RNA polymerase subunit omega.